Reading from the N-terminus, the 314-residue chain is tRNA dimethylallyltransferase (314 aa).

Position 9-16 (glycine 9–threonine 16) interacts with ATP. Threonine 11–threonine 16 provides a ligand contact to substrate. The segment at aspartate 34 to glutamine 37 is interaction with substrate tRNA.

The protein belongs to the IPP transferase family. Monomer. It depends on Mg(2+) as a cofactor.

The catalysed reaction is adenosine(37) in tRNA + dimethylallyl diphosphate = N(6)-dimethylallyladenosine(37) in tRNA + diphosphate. Functionally, catalyzes the transfer of a dimethylallyl group onto the adenine at position 37 in tRNAs that read codons beginning with uridine, leading to the formation of N6-(dimethylallyl)adenosine (i(6)A). The protein is tRNA dimethylallyltransferase of Desulfitobacterium hafniense (strain Y51).